The primary structure comprises 662 residues: DNA ligase (662 aa).

NAD(+) contacts are provided by residues 31–35, 80–81, and Glu-109; these read DYEYD and SL. The active-site N6-AMP-lysine intermediate is Lys-111. NAD(+) contacts are provided by Arg-132, Glu-166, Lys-282, and Lys-306. Positions 400, 403, 418, and 423 each coordinate Zn(2+). The BRCT domain maps to 581-662; it reads KVNNIFEGKT…FEEMLKGENI (82 aa).

Belongs to the NAD-dependent DNA ligase family. LigA subfamily. Mg(2+) is required as a cofactor. It depends on Mn(2+) as a cofactor.

It catalyses the reaction NAD(+) + (deoxyribonucleotide)n-3'-hydroxyl + 5'-phospho-(deoxyribonucleotide)m = (deoxyribonucleotide)n+m + AMP + beta-nicotinamide D-nucleotide.. Its function is as follows. DNA ligase that catalyzes the formation of phosphodiester linkages between 5'-phosphoryl and 3'-hydroxyl groups in double-stranded DNA using NAD as a coenzyme and as the energy source for the reaction. It is essential for DNA replication and repair of damaged DNA. This chain is DNA ligase, found in Thermoanaerobacter pseudethanolicus (strain ATCC 33223 / 39E) (Clostridium thermohydrosulfuricum).